Reading from the N-terminus, the 287-residue chain is ATP synthase gamma chain (287 aa).

This sequence belongs to the ATPase gamma chain family. F-type ATPases have 2 components, CF(1) - the catalytic core - and CF(0) - the membrane proton channel. CF(1) has five subunits: alpha(3), beta(3), gamma(1), delta(1), epsilon(1). CF(0) has three main subunits: a, b and c.

The protein resides in the cell inner membrane. Functionally, produces ATP from ADP in the presence of a proton gradient across the membrane. The gamma chain is believed to be important in regulating ATPase activity and the flow of protons through the CF(0) complex. The chain is ATP synthase gamma chain from Xylella fastidiosa (strain 9a5c).